The sequence spans 401 residues: Probable cysteine desulfurase (401 aa).

Residue Lys-223 is modified to N6-(pyridoxal phosphate)lysine.

Belongs to the class-V pyridoxal-phosphate-dependent aminotransferase family. Csd subfamily. Pyridoxal 5'-phosphate is required as a cofactor.

The catalysed reaction is (sulfur carrier)-H + L-cysteine = (sulfur carrier)-SH + L-alanine. Catalyzes the removal of elemental sulfur and selenium atoms from L-cysteine, L-cystine, L-selenocysteine, and L-selenocystine to produce L-alanine. The sequence is that of Probable cysteine desulfurase (csdA) from Pseudomonas putida (strain ATCC 47054 / DSM 6125 / CFBP 8728 / NCIMB 11950 / KT2440).